The following is a 621-amino-acid chain: MVKKELEMYNLYTFQIDLDKKLLFEKADNQQNYSKIRARYFKNSARNQQAVFLNKNLIKNTFNKALLNFSDFLSGSGVESIFKQVIDDQPEVLNYLKQVKKEDSCDGHSEASQLVFNVVINPKNTLANFFEELTIYLHFNEENNTVVGSFSLKWNIKRADLFSETKNIAINNLIHTFCKNNLNEVSFIQIIKCFAKTLINKQGQIVLESCAFKQKWQNIVEQKYPFSTIHKNLKIVNSDFFDAFFVILLLICHLNNNLLWLCEKTEHFEWKLNSKISNFKEDNTEVYLSKMLLFLKDWYFENQAVTNEDIEKVDEVEDIGKLVEKYSANQPQKLSSNSTVYVFEPDKKQCFLKNDDFFNTNEAKLLFLITMQPNVFGLDDTAIANDLNLREIGDFFKEIDFTDSDVLNDFQQQKETLLVRRTFNQLLFMNSNTDVLSIVNNKFKSAIHNIVWTITYSKAIMLKAFDYSKIFEQNRTNDPSLLRSNLNSINRLRYLSEYFRTASVKYDQLYTKVKEYMQLDQFLVDMINQVNHEDEIFGKYKERVYLSLGIVTAVVFGIIEFFNCVWTVLTVSQQTAEKSLADPRNTVIIGIGTILVLTLLITILTFMTRRLYLFEFNKKHK.

3 helical membrane-spanning segments follow: residues 240–260 (FFDA…NLLW), 548–568 (LGIV…VWTV), and 587–607 (VIIG…LTFM).

It is found in the cell membrane. This is an uncharacterized protein from Mycoplasma pneumoniae (strain ATCC 29342 / M129 / Subtype 1) (Mycoplasmoides pneumoniae).